Here is a 218-residue protein sequence, read N- to C-terminus: Adenylate kinase (218 aa).

G10–T15 lines the ATP pocket. Residues S30–V59 form an NMP region. AMP is bound by residues T31, R36, G57–V59, G85–R88, and Q92. The segment at G122–D159 is LID. ATP is bound by residues R123 and S132–Y133. R156 and R167 together coordinate AMP. G203 lines the ATP pocket.

The protein belongs to the adenylate kinase family. As to quaternary structure, monomer.

The protein localises to the cytoplasm. The enzyme catalyses AMP + ATP = 2 ADP. Its pathway is purine metabolism; AMP biosynthesis via salvage pathway; AMP from ADP: step 1/1. Catalyzes the reversible transfer of the terminal phosphate group between ATP and AMP. Plays an important role in cellular energy homeostasis and in adenine nucleotide metabolism. The protein is Adenylate kinase of Bordetella petrii (strain ATCC BAA-461 / DSM 12804 / CCUG 43448).